Here is a 130-residue protein sequence, read N- to C-terminus: Holo-[acyl-carrier-protein] synthase (130 aa).

Aspartate 9 and glutamate 58 together coordinate Mg(2+).

The protein belongs to the P-Pant transferase superfamily. AcpS family. Mg(2+) serves as cofactor.

Its subcellular location is the cytoplasm. The enzyme catalyses apo-[ACP] + CoA = holo-[ACP] + adenosine 3',5'-bisphosphate + H(+). Functionally, transfers the 4'-phosphopantetheine moiety from coenzyme A to a Ser of acyl-carrier-protein. This Mycobacterium bovis (strain ATCC BAA-935 / AF2122/97) protein is Holo-[acyl-carrier-protein] synthase.